Here is a 60-residue protein sequence, read N- to C-terminus: UPF0434 protein ECA2555 (60 aa).

The protein belongs to the UPF0434 family.

This Pectobacterium atrosepticum (strain SCRI 1043 / ATCC BAA-672) (Erwinia carotovora subsp. atroseptica) protein is UPF0434 protein ECA2555.